The following is a 159-amino-acid chain: Nucleotide-binding protein PSPPH_4093 (159 aa).

Belongs to the YajQ family.

Nucleotide-binding protein. The chain is Nucleotide-binding protein PSPPH_4093 from Pseudomonas savastanoi pv. phaseolicola (strain 1448A / Race 6) (Pseudomonas syringae pv. phaseolicola (strain 1448A / Race 6)).